An 89-amino-acid polypeptide reads, in one-letter code: UPF0237 protein CPE1496 (89 aa).

Residues 4–84 form the ACT domain; sequence VITVVGKDKV…ISVQHEDIFN (81 aa).

This sequence belongs to the UPF0237 family.

The protein is UPF0237 protein CPE1496 of Clostridium perfringens (strain 13 / Type A).